Consider the following 342-residue polypeptide: Ketoreductase nvfG (342 aa).

It belongs to the NAD(P)-dependent epimerase/dehydratase family. Dihydroflavonol-4-reductase subfamily.

Its pathway is secondary metabolite biosynthesis; terpenoid biosynthesis. Ketoreductase; part of the gene cluster that mediates the biosynthesis of novofumigatonin, a heavily oxygenated meroterpenoid containing a unique orthoester moiety. The first step of the pathway is the synthesis of 3,5-dimethylorsellinic acid (DMOA) by the polyketide synthase nvfA via condensation of one acetyl-CoA starter unit with 3 malonyl-CoA units and 2 methylations. DMOA is then converted to farnesyl-DMOA by the farnesyltransferase nvfB. Epoxydation by FAD-dependent monooxygenase nvfK, followed by a protonation-initiated cyclization catalyzed by the terpene cyclase nvfL leads to the production of asnavolin H. The short chain dehydrogenase nvfC then as a 3-OH dehydrogenase of asnovolin H to yield chemesin D. There are two branches to synthesize asnovolin A from chemesin D. In one branch, chemesin D undergoes Baeyer-Villiger oxidation by nvfH, methylation by nvfJ, and enoyl reduction by the nvfM D enoylreductase that reduces the double bond between C-5'and C-6', to form respectively asnovolin I, asnovolin K, and asnovolin A. In the other branch, the methylation precedes the Baeyer-Villiger oxidation and the enoyl reduction to yield asnovolin A via the asnovolin J intermediate. Asnovolin A is further converted to fumigatonoid A by the Fe(II)/2-oxoglutarate-dependent dioxygenase nvfI that catalyzes an endoperoxidation reaction. The alpha/beta hydrolase nvfD then acts as an epimerase that converts fumigatonoid A to its C-5' epimer, which then undergoes spontaneous or nvfD-catalyzed lactonization. The following step utilizes the ketoreductase nvfG to produce fumigatonoid B. The dioxygenase nvfE further converts fumigatonoid B into fumigatonoid C. Finally the Fe(II)/2-oxoglutarate-dependent dioxygenase nvfF catalyzes two rounds of oxidation to transform fumigatonoid C into the end product, novofumigatonin A. The polypeptide is Ketoreductase nvfG (Aspergillus novofumigatus (strain IBT 16806)).